A 306-amino-acid polypeptide reads, in one-letter code: Pantothenate kinase (306 aa).

Residue 90–97 participates in ATP binding; it reads GSVAVGKS.

It belongs to the prokaryotic pantothenate kinase family.

It localises to the cytoplasm. The catalysed reaction is (R)-pantothenate + ATP = (R)-4'-phosphopantothenate + ADP + H(+). It participates in cofactor biosynthesis; coenzyme A biosynthesis; CoA from (R)-pantothenate: step 1/5. This is Pantothenate kinase from Listeria monocytogenes serotype 4b (strain CLIP80459).